A 1032-amino-acid polypeptide reads, in one-letter code: Putative oxidoreductase YgfK (1032 aa).

Residues 928 to 958 (RFQTLHLDAYCNECGNCAQFCPWNGKPYKDK) enclose the 4Fe-4S ferredoxin-type domain. Cysteine 938, cysteine 941, cysteine 944, and cysteine 948 together coordinate [4Fe-4S] cluster.

[4Fe-4S] cluster serves as cofactor.

Functionally, could be an iron-sulfur flavoprotein with NADPH:O(2) oxidoreductase activity. This chain is Putative oxidoreductase YgfK (ygfK), found in Escherichia coli (strain K12).